A 1984-amino-acid chain; its full sequence is Sodium channel protein type 9 subunit alpha (1984 aa).

The Cytoplasmic segment spans residues 1-125 (MAMLPPPGPQ…RRISIKILVH (125 aa)). Residues 26 to 39 (RISEEKAKEHKDEK) are compositionally biased toward basic and acidic residues. A disordered region spans residues 26 to 55 (RISEEKAKEHKDEKKDDEEEGPKPSSDLEA). One copy of the I repeat lies at 112-410 (FSPLRRISIK…VAMAYEEQNQ (299 aa)). Residues 126–145 (SLFSMLIMCTILTNCIFMTL) traverse the membrane as a helical segment. Topologically, residues 146 to 150 (SNPPE) are extracellular. A helical transmembrane segment spans residues 151 to 172 (WTKNVEYTFTGIYTFESLIKIL). Topologically, residues 173–185 (ARGFCVGEFTFLR) are cytoplasmic. A helical membrane pass occupies residues 186–204 (DPWNWLDFVVIVFAYLTEF). Residues 205 to 210 (VNLGNV) lie on the Extracellular side of the membrane. The N-linked (GlcNAc...) asparagine glycan is linked to Asn-209. Residues 211–227 (SALRTFRVLRALKTISV) form a helical membrane-spanning segment. The Cytoplasmic portion of the chain corresponds to 228 to 241 (IPGLKTIVGALIQS). Residues 242-267 (VKKLSDVMILTVFCLSVFALIGLQLF) traverse the membrane as a helical segment. The Extracellular portion of the chain corresponds to 268-346 (MGNLKHKCFR…PDYGYTSFDT (79 aa)). Cys-275 and Cys-324 are oxidised to a cystine. Residue Asn-283 is glycosylated (N-linked (GlcNAc...) asparagine). Residues 347-363 (FSWAFLALFRLMTQDYW) constitute an intramembrane region (pore-forming). The Extracellular segment spans residues 364-376 (ENLYQQTLRAAGK). A helical membrane pass occupies residues 377 to 402 (TYMIFFVVVIFLGSFYLINLILAVVA). At 403–744 (MAYEEQNQAN…LIYFIVMDPF (342 aa)) the chain is on the cytoplasmic side. Residues 461 to 471 (SSSETSRLSSK) are compositionally biased toward low complexity. Disordered regions lie at residues 461 to 542 (SSSE…RGSL) and 576 to 609 (IFGD…RSPP). Over residues 474–486 (KERRNRRKKKKQK) the composition is skewed to basic residues. Residues 489–509 (SGEEKGDDEKLSKSGSEESIR) show a composition bias toward basic and acidic residues. An II repeat occupies 725 to 988 (CSPYWIKFKK…EEDTDANNLQ (264 aa)). A helical membrane pass occupies residues 745–761 (VDLAITICIVLNTLFMA). Residues 762–770 (MEHHPMTEE) lie on the Extracellular side of the membrane. A helical membrane pass occupies residues 771 to 795 (FKNVLAVGNLIFTGIFAAEMVLKLI). At 796–804 (AMDPYEYFQ) the chain is on the cytoplasmic side. Residues 805 to 821 (VGWNIFDSLIVTLSLIE) traverse the membrane as a helical segment. Residues 822 to 830 (LFLADVEGL) lie on the Extracellular side of the membrane. Residues 831–847 (SVLRSFRLLRVFKLAKS) traverse the membrane as a helical segment. The Cytoplasmic segment spans residues 848–864 (WPTLNMLIKIIGNSVGA). The chain crosses the membrane as a helical span at residues 865-887 (LGNLTLVLAIIVFIFAVVGMQLF). The Extracellular portion of the chain corresponds to 888-914 (GKSYKECVCKINVDCKLPRWHMNDFFH). An intrachain disulfide couples Cys-896 to Cys-902. An intramembrane region (pore-forming) is located at residues 915–927 (SFLIVFRVLCGEW). Residues 928-939 (IETMWDCMEVAG) lie on the Extracellular side of the membrane. A disulfide bond links Cys-934 and Cys-943. The helical transmembrane segment at 940 to 966 (QTMCLIVYMMVMVIGNLVVLNLFLALL) threads the bilayer. Residues 967 to 1185 (LSSFSSDNLT…WWTIRKTCYR (219 aa)) lie on the Cytoplasmic side of the membrane. 2 disordered regions span residues 1015 to 1040 (KKPK…ISNR) and 1103 to 1145 (EELS…EPVN). Residues 1019-1035 (GSKDTKRTADPNNKKEN) show a composition bias toward basic and acidic residues. Residues 1135 to 1145 (GEEEAEAEPVN) are compositionally biased toward acidic residues. The III repeat unit spans residues 1178-1486 (TIRKTCYRIV…KKYYNAMKKL (309 aa)). A helical transmembrane segment spans residues 1186–1210 (IVEHSWFESFIVLMILLSSGALAFE). Residues 1211 to 1222 (DIYIEKKKTIKI) lie on the Extracellular side of the membrane. The helical transmembrane segment at 1223-1248 (ILEYADKIFTYIFILEMLLKWVAYGY) threads the bilayer. At 1249–1250 (KT) the chain is on the cytoplasmic side. A helical membrane pass occupies residues 1251–1276 (YFTNAWCWLDFLIVDVSLVTLVANTL). At 1277 to 1285 (GYSDLGPIK) the chain is on the extracellular side. Residues 1286-1302 (SLRTLRALRPLRALSRF) form a helical membrane-spanning segment. At 1303–1315 (EGMRVVVNALIGA) the chain is on the cytoplasmic side. A helical membrane pass occupies residues 1316-1340 (IPSIMNVLLVCLIFWLIFSIMGVNL). Topologically, residues 1341–1392 (FAGKFYECVNTTDGSRFPTSQVANRSECFALMNVSGNVRWKNLKVNFDNVGL) are extracellular. Cys-1348 and Cys-1368 are joined by a disulfide. Residues Asn-1350, Asn-1364, and Asn-1373 are each glycosylated (N-linked (GlcNAc...) asparagine). Residues 1393–1403 (GYLSLLQVATF) constitute an intramembrane region (pore-forming). Topologically, residues 1404–1429 (KGWMDIMYAAVDSVNVNEQPKYEYSL) are extracellular. The chain crosses the membrane as a helical span at residues 1430-1455 (YMYIYFVIFIIFGSFFTLNLFIGVII). Residues 1456–1512 (DNFNQQKKKLGGQDIFMTEEQKKYYNAMKKLGSKKPQKPIPRPGNKFQGCIFDLVTN) lie on the Cytoplasmic side of the membrane. At Ser-1488 the chain carries Phosphoserine; by PKC. The stretch at 1495-1793 (IPRPGNKFQG…WEKFDPDATQ (299 aa)) is one IV repeat. The chain crosses the membrane as a helical span at residues 1513 to 1532 (QAFDITIMVLICLNMVTMMV). Residues 1533–1543 (EKEGQTEYMDY) lie on the Extracellular side of the membrane. Residues 1544 to 1565 (VLHWINMVFIILFTGECVLKLI) form a helical membrane-spanning segment. Residues 1566–1574 (SLRHYYFTV) are Cytoplasmic-facing. A helical transmembrane segment spans residues 1575-1596 (GWNIFDFVVVILSIVGMFLAEM). The Extracellular portion of the chain corresponds to 1597-1605 (IEKYFVSPT). Residues 1606 to 1625 (LFRVIRLARIGRILRLIKGA) traverse the membrane as a helical segment. Residues 1626-1638 (KGIRTLLFALMMS) are Cytoplasmic-facing. The chain crosses the membrane as a helical span at residues 1639–1661 (LPALFNIGLLLFLVMFIYAIFGM). The Extracellular segment spans residues 1662 to 1684 (SNFAYVKKEAGINDMFNFETFGN). Residues 1685–1697 (SMICLFQITTSAG) constitute an intramembrane region (pore-forming). Over 1698 to 1731 (WDGLLAPILNSAPPDCDPKKVHPGSSVEGDCGNP) the chain is Extracellular. An intrachain disulfide couples Cys-1713 to Cys-1728. Residues 1732–1757 (SVGIFYFVSYIIISFLVVVNMYIAVI) traverse the membrane as a helical segment. Over 1758–1984 (LENFSVATEE…EDKEKDESRK (227 aa)) the chain is Cytoplasmic. The 30-residue stretch at 1887–1916 (EEVSATIIQRAYRRYRLRQHVKNISSIYIK) folds into the IQ domain. Over residues 1916–1930 (KDGDRDDDLPNKEDT) the composition is skewed to basic and acidic residues. Positions 1916 to 1984 (KDGDRDDDLP…EDKEKDESRK (69 aa)) are disordered. Positions 1946 to 1958 (VTASTISPPSYDS) are enriched in polar residues. The span at 1960–1984 (TKPDQEKYETDKTEKEDKEKDESRK) shows a compositional bias: basic and acidic residues.

Belongs to the sodium channel (TC 1.A.1.10) family. Nav1.7/SCN9A subfamily. As to quaternary structure, the Nav1.7 voltage-gated sodium channel consists of an ion-conducting alpha subunit SCN9A which is functional on its own regulated by one or more beta-1 (SCN1B), beta-2 (SCN2B), beta-3 (SCN3B) and beta-4 (SCN4B) subunits. SCN1B and SCN3B are non-covalently associated with SCN9A. SCN2B and SCN4B are disulfide-linked to SCN9A. SCN1B regulates channel inactivation. Interacts with NEDD4 and NEDD4L; regulates Nav1.7 activity most probably through ubiquitination and subsequent endocytosis. Interacts with TMEM233; modulates the gating properties of NaV1.7. In terms of processing, phosphorylation at Ser-1488 by PKC in a highly conserved cytoplasmic loop increases peak sodium currents. Post-translationally, ubiquitinated by NEDD4L; which may promote its endocytosis. Does not seem to be ubiquitinated by NEDD4. Ubiquitinated by NEDD4L; which may promote its endocytosis. In terms of tissue distribution, expressed at high level in the dorsal root ganglion and at much lower levels in the brain, sciatic nerve, nodose ganglia, heart, thyroid and adrenal glands and Schwann cells, but not in the cardiac and skeletal muscles, brain and liver.

Its subcellular location is the cell membrane. It is found in the cell projection. It localises to the neuron projection. The protein resides in the axon. The enzyme catalyses Na(+)(in) = Na(+)(out). With respect to regulation, inhibited by the conotoxin GVIIJ. Pore-forming subunit of Nav1.7, a voltage-gated sodium (Nav) channel that directly mediates the depolarizing phase of action potentials in excitable membranes. Navs, also called VGSCs (voltage-gated sodium channels) or VDSCs (voltage-dependent sodium channels), operate by switching between closed and open conformations depending on the voltage difference across the membrane. In the open conformation they allow Na(+) ions to selectively pass through the pore, along their electrochemical gradient. The influx of Na(+) ions provokes membrane depolarization, initiating the propagation of electrical signals throughout cells and tissues. Nav1.7 plays a crucial role in controlling the excitability and action potential propagation from nociceptor neurons, thereby contributing to the sensory perception of pain. The chain is Sodium channel protein type 9 subunit alpha from Rattus norvegicus (Rat).